The primary structure comprises 201 residues: Large ribosomal subunit protein mL61 (201 aa).

A disordered region spans residues 87–118 (RDDKDAKPSSTPFPTSSADGSSPAPKPAQGER). Positions 94–106 (PSSTPFPTSSADG) are enriched in polar residues.

Belongs to the mitochondrion-specific ribosomal protein mL61 family. As to quaternary structure, component of the mitochondrial large ribosomal subunit (mt-LSU). Mature N.crassa 74S mitochondrial ribosomes consist of a small (37S) and a large (54S) subunit. The 37S small subunit contains a 16S ribosomal RNA (16S mt-rRNA) and 32 different proteins. The 54S large subunit contains a 23S rRNA (23S mt-rRNA) and 42 different proteins.

The protein localises to the mitochondrion. In terms of biological role, component of the mitochondrial ribosome (mitoribosome), a dedicated translation machinery responsible for the synthesis of mitochondrial genome-encoded proteins, including at least some of the essential transmembrane subunits of the mitochondrial respiratory chain. The mitoribosomes are attached to the mitochondrial inner membrane and translation products are cotranslationally integrated into the membrane. This is Large ribosomal subunit protein mL61 (mrp49) from Neurospora crassa (strain ATCC 24698 / 74-OR23-1A / CBS 708.71 / DSM 1257 / FGSC 987).